Reading from the N-terminus, the 229-residue chain is GTP cyclohydrolase 1 (229 aa).

The interval 1–21 (MTLAKPGSGSQSRMDDKAHFK) is disordered. Zn(2+) is bound by residues C116, H119, and C187.

The protein belongs to the GTP cyclohydrolase I family. As to quaternary structure, toroid-shaped homodecamer, composed of two pentamers of five dimers.

The enzyme catalyses GTP + H2O = 7,8-dihydroneopterin 3'-triphosphate + formate + H(+). It functions in the pathway cofactor biosynthesis; 7,8-dihydroneopterin triphosphate biosynthesis; 7,8-dihydroneopterin triphosphate from GTP: step 1/1. The sequence is that of GTP cyclohydrolase 1 from Synechococcus sp. (strain JA-2-3B'a(2-13)) (Cyanobacteria bacterium Yellowstone B-Prime).